The chain runs to 365 residues: Patr class I histocompatibility antigen, A-108 alpha chain (365 aa).

The signal sequence occupies residues 1 to 24 (MAVMPPRTLLLLLSGALALTQTWA). Residues 25 to 114 (GSHSMRYFYT…LRGYYNQSED (90 aa)) form an alpha-1 region. The Extracellular segment spans residues 25–308 (GSHSMRYFYT…EPSSQPTIPI (284 aa)). The N-linked (GlcNAc...) asparagine glycan is linked to asparagine 110. The alpha-2 stretch occupies residues 115–206 (GSHTIQIMYG…ENGKETLQRT (92 aa)). 2 disulfides stabilise this stretch: cysteine 125–cysteine 188 and cysteine 227–cysteine 283. Residues 207–298 (DPPKTHMTHH…GLPKPLTLRW (92 aa)) form an alpha-3 region. Residues 209-295 (PKTHMTHHPI…QHEGLPKPLT (87 aa)) enclose the Ig-like C1-type domain. Residues 299–308 (EPSSQPTIPI) form a connecting peptide region. Residues 309–332 (VGIIAGLVLLGAVITGAVVAAVMW) form a helical membrane-spanning segment. At 333 to 365 (RRKSSDRKGGSYTQAASSDSAQGSDVSLTACKV) the chain is on the cytoplasmic side. The tract at residues 339–360 (RKGGSYTQAASSDSAQGSDVSL) is disordered. The residue at position 343 (serine 343) is a Phosphoserine. At tyrosine 344 the chain carries Phosphotyrosine. The span at 346–359 (QAASSDSAQGSDVS) shows a compositional bias: low complexity. Phosphoserine occurs at positions 349, 350, 352, 356, and 359.

It belongs to the MHC class I family. Heterodimer of an alpha chain and a beta chain (beta-2-microglobulin).

The protein resides in the membrane. Functionally, involved in the presentation of foreign antigens to the immune system. This chain is Patr class I histocompatibility antigen, A-108 alpha chain (Patr-A), found in Pan troglodytes (Chimpanzee).